Reading from the N-terminus, the 99-residue chain is Aspartyl/glutamyl-tRNA(Asn/Gln) amidotransferase subunit C (99 aa).

This sequence belongs to the GatC family. In terms of assembly, heterotrimer of A, B and C subunits.

The enzyme catalyses L-glutamyl-tRNA(Gln) + L-glutamine + ATP + H2O = L-glutaminyl-tRNA(Gln) + L-glutamate + ADP + phosphate + H(+). The catalysed reaction is L-aspartyl-tRNA(Asn) + L-glutamine + ATP + H2O = L-asparaginyl-tRNA(Asn) + L-glutamate + ADP + phosphate + 2 H(+). In terms of biological role, allows the formation of correctly charged Asn-tRNA(Asn) or Gln-tRNA(Gln) through the transamidation of misacylated Asp-tRNA(Asn) or Glu-tRNA(Gln) in organisms which lack either or both of asparaginyl-tRNA or glutaminyl-tRNA synthetases. The reaction takes place in the presence of glutamine and ATP through an activated phospho-Asp-tRNA(Asn) or phospho-Glu-tRNA(Gln). The polypeptide is Aspartyl/glutamyl-tRNA(Asn/Gln) amidotransferase subunit C (Paracidovorax citrulli (strain AAC00-1) (Acidovorax citrulli)).